Consider the following 418-residue polypeptide: UDP-N-acetylglucosamine 1-carboxyvinyltransferase (418 aa).

22–23 contacts phosphoenolpyruvate; the sequence is KN. A UDP-N-acetyl-alpha-D-glucosamine-binding site is contributed by R93. The active-site Proton donor is the C117. A 2-(S-cysteinyl)pyruvic acid O-phosphothioketal modification is found at C117. The UDP-N-acetyl-alpha-D-glucosamine site is built by D306 and I328.

Belongs to the EPSP synthase family. MurA subfamily.

It localises to the cytoplasm. The catalysed reaction is phosphoenolpyruvate + UDP-N-acetyl-alpha-D-glucosamine = UDP-N-acetyl-3-O-(1-carboxyvinyl)-alpha-D-glucosamine + phosphate. It participates in cell wall biogenesis; peptidoglycan biosynthesis. Functionally, cell wall formation. Adds enolpyruvyl to UDP-N-acetylglucosamine. This chain is UDP-N-acetylglucosamine 1-carboxyvinyltransferase, found in Hydrogenovibrio crunogenus (strain DSM 25203 / XCL-2) (Thiomicrospira crunogena).